The following is a 434-amino-acid chain: Glutamate-1-semialdehyde 2,1-aminomutase 1 (434 aa).

The residue at position 270 (Lys270) is an N6-(pyridoxal phosphate)lysine.

The protein belongs to the class-III pyridoxal-phosphate-dependent aminotransferase family. HemL subfamily. In terms of assembly, homodimer. It depends on pyridoxal 5'-phosphate as a cofactor.

It localises to the cytoplasm. The enzyme catalyses (S)-4-amino-5-oxopentanoate = 5-aminolevulinate. The protein operates within porphyrin-containing compound metabolism; protoporphyrin-IX biosynthesis; 5-aminolevulinate from L-glutamyl-tRNA(Glu): step 2/2. The chain is Glutamate-1-semialdehyde 2,1-aminomutase 1 from Bacillus anthracis (strain CDC 684 / NRRL 3495).